Consider the following 228-residue polypeptide: Response regulator MprA (228 aa).

Residues 2–116 (RILVVDDDRA…ELLARMRALL (115 aa)) form the Response regulatory domain. A 4-aspartylphosphate modification is found at aspartate 46. The segment at residues 127-225 (SVAMTFSDLT…VRGVGYVLRE (99 aa)) is a DNA-binding region (ompR/PhoB-type).

Phosphorylated and dephosphorylated by MprB.

It is found in the cytoplasm. Member of the two-component regulatory system MprB/MprA which contributes to maintaining a balance among several systems involved in stress resistance and is required for establishment and maintenance of persistent infection in the host. Functions as a transcriptional regulator that recognizes a 19-bp nucleotide motif comprizing two loosely conserved 8-bp direct DNA-binding motif repeats separated by a 3-bp spacer region. This is Response regulator MprA (mprA) from Mycobacterium avium (strain 104).